The sequence spans 458 residues: ATP synthase subunit beta (458 aa).

An ATP-binding site is contributed by 148-155 (GGAGVGKT).

It belongs to the ATPase alpha/beta chains family. F-type ATPases have 2 components, CF(1) - the catalytic core - and CF(0) - the membrane proton channel. CF(1) has five subunits: alpha(3), beta(3), gamma(1), delta(1), epsilon(1). CF(0) has three main subunits: a(1), b(2) and c(9-12). The alpha and beta chains form an alternating ring which encloses part of the gamma chain. CF(1) is attached to CF(0) by a central stalk formed by the gamma and epsilon chains, while a peripheral stalk is formed by the delta and b chains.

It localises to the cell inner membrane. It carries out the reaction ATP + H2O + 4 H(+)(in) = ADP + phosphate + 5 H(+)(out). Produces ATP from ADP in the presence of a proton gradient across the membrane. The catalytic sites are hosted primarily by the beta subunits. This is ATP synthase subunit beta from Pseudomonas putida (strain GB-1).